We begin with the raw amino-acid sequence, 33 residues long: Protamine TP14 (33 aa).

The disordered stretch occupies residues 1–33 (MPRRRRSSRPPVRRRRRPRVSRRRRRRGGRRRR).

Testis.

The protein localises to the nucleus. It localises to the chromosome. Protamines substitute for histones in the chromatin of sperm during the haploid phase of spermatogenesis. They compact sperm DNA into a highly condensed, stable and inactive complex. This Oncorhynchus mykiss (Rainbow trout) protein is Protamine TP14.